The primary structure comprises 2258 residues: Probable serine/threonine-protein kinase ifkA (2258 aa).

2 disordered regions span residues 43–108 (RVNS…HQMG) and 189–308 (EMNN…KEND). Residues 45 to 57 (NSSDDINNNNNNN) show a composition bias toward low complexity. A compositionally biased stretch (acidic residues) spans 58–100 (NDDDDDNDDYDDSDDENSDSDYDDYDDSDDENSDDEFYSDDED). A compositionally biased stretch (low complexity) spans 191–301 (NNLTNSNNSN…NKELIDNNNN (111 aa)). Residues 273 to 309 (NNNNNISNNKINKINNNNNNKELIDNNNNNKDKENDL) adopt a coiled-coil conformation. In terms of domain architecture, Protein kinase 1 spans 319–691 (WKKGSCIERK…AGILLKHPFL (373 aa)). ATP is bound by residues 325–333 (IERKSNYSV) and lysine 348. The disordered stretch occupies residues 358–398 (SSSSLTSLSNSNNNNSNNNNNNNNNNNNNNNNNNNNNNNNN). Positions 359–398 (SSSLTSLSNSNNNNSNNNNNNNNNNNNNNNNNNNNNNNNN) are enriched in low complexity. Residue aspartate 498 is the Proton acceptor of the active site. 2 disordered regions span residues 741-768 (KSQT…NGSN) and 782-870 (PLAT…MTPL). Positions 746 to 768 (NNNNDNNNLASSNELLSSSNGSN) are enriched in low complexity. The span at 782–791 (PLATSSSLDN) shows a compositional bias: polar residues. The span at 793-805 (TPPPSRPISPKPS) shows a compositional bias: pro residues. The segment covering 841–870 (PQQNFNTPPTTTTTTTTPTATPTTPTMTPL) has biased composition (low complexity). Residues 894–1482 (FEEIEMIGKG…TKQLLESGLL (589 aa)) form the Protein kinase 2 domain. ATP-binding positions include 900–908 (IGKGGFGVV) and lysine 923. Positions 1053–1094 (TLSSSNTSSSSSLLSNNKSKILNTSKSTSTNTSTSTSTSNTN) are enriched in low complexity. A disordered region spans residues 1053–1259 (TLSSSNTSSS…SSSRKKPPKE (207 aa)). Positions 1095–1106 (KNKKISKKKKSK) are enriched in basic residues. Low complexity predominate over residues 1156–1185 (NNNNNNDNNNNYHSDNESDSFSGSISMSDG). A compositionally biased stretch (acidic residues) spans 1206–1233 (DENENDDDDEEDDDDEYDEEDDDYETFD). A compositionally biased stretch (low complexity) spans 1242 to 1251 (SNNSKLSTSS). The active-site Proton acceptor is aspartate 1313. 2 disordered regions span residues 1343-1370 (KSDD…TAQQ) and 2048-2104 (GSGG…QQTS). Low complexity predominate over residues 1347 to 1368 (LNSSTSNTANNINLSSSTNSTA). A compositionally biased stretch (gly residues) spans 2048-2072 (GSGGSGGSGGGSSMSSGGGGGGNSN). The segment covering 2085-2099 (SNQSTSSSGNSNNSN) has biased composition (low complexity).

The protein belongs to the protein kinase superfamily. Ser/Thr protein kinase family.

The enzyme catalyses L-seryl-[protein] + ATP = O-phospho-L-seryl-[protein] + ADP + H(+). It carries out the reaction L-threonyl-[protein] + ATP = O-phospho-L-threonyl-[protein] + ADP + H(+). Phosphorylates eIF2-alpha, from 1 to 7 hours after the onset of development or during the preaggregation state, resulting in a shift from polysomes to free ribosomes for bulk mRNA. The chain is Probable serine/threonine-protein kinase ifkA (ifkA) from Dictyostelium discoideum (Social amoeba).